A 341-amino-acid polypeptide reads, in one-letter code: Fructose-1,6-bisphosphatase, cytosolic (341 aa).

Mg(2+) contacts are provided by glutamate 71, glutamate 100, aspartate 121, leucine 123, and aspartate 124. Substrate-binding positions include 124–127 (DGSS), asparagine 215, tyrosine 247, tyrosine 267, and lysine 277. A Mg(2+)-binding site is contributed by glutamate 283.

This sequence belongs to the FBPase class 1 family. The cofactor is Mg(2+).

It is found in the cytoplasm. Its subcellular location is the nucleus. It catalyses the reaction beta-D-fructose 1,6-bisphosphate + H2O = beta-D-fructose 6-phosphate + phosphate. In terms of biological role, catalyzes the first irreversible reaction from fructose-1,6-bisphosphate to fructose-6-phosphate and inorganic phosphate and plays an important regulatory role in sucrose biosynthesis and metabolism. Its activity is essential to regulate starch levels. Functions in fructose-mediated signaling independently of its catalytic activity in sugar metabolism. May act downstream of ABA2/GIN1, which is involved in abscisic acid (ABA) synthesis to regulate autotrophic transition and modulate early seedling establishment after seed germination. The polypeptide is Fructose-1,6-bisphosphatase, cytosolic (Arabidopsis thaliana (Mouse-ear cress)).